A 1256-amino-acid chain; its full sequence is GPI inositol-deacylase (1256 aa).

Residues 37–48 (DVYANSTTNATA) show a composition bias toward polar residues. Positions 37–203 (DVYANSTTNA…MEKEEEQKFV (167 aa)) are disordered. N-linked (GlcNAc...) asparagine glycans are attached at residues asparagine 41 and asparagine 45. Over residues 59 to 68 (PRPSRPSQSS) the composition is skewed to low complexity. Positions 69–83 (AAERTSPESPSVRQS) are enriched in polar residues. Residues 107-135 (QSPSQQSQNQQQQQQQQQQQQQQQQQQQS) show a composition bias toward low complexity. Polar residues predominate over residues 143-156 (SGNFNWKLSHSRNG). Asparagine 155 carries an N-linked (GlcNAc...) asparagine glycan. A compositionally biased stretch (low complexity) spans 165 to 180 (FFSSSFSHSPSTPPLS). Over residues 190 to 202 (HSKEMEKEEEQKF) the composition is skewed to basic and acidic residues. A helical membrane pass occupies residues 214 to 234 (AITFVTLLISILGIGFLALVL). N-linked (GlcNAc...) asparagine glycosylation is present at asparagine 235. Serine 397 is an active-site residue. N-linked (GlcNAc...) asparagine glycosylation is present at asparagine 582. Transmembrane regions (helical) follow at residues 882-902 (LYMR…TLVL) and 929-949 (SIPL…NSSS). Residue asparagine 960 is glycosylated (N-linked (GlcNAc...) asparagine). 6 helical membrane-spanning segments follow: residues 980-1000 (PFFW…CTVF), 1005-1025 (LTLV…PGWI), 1053-1073 (ILLV…VCCL), 1103-1123 (SILL…VVWI), 1130-1150 (WLTP…IILV), and 1172-1192 (VLLF…AYML). Residues asparagine 1212, asparagine 1239, and asparagine 1242 are each glycosylated (N-linked (GlcNAc...) asparagine).

This sequence belongs to the GPI inositol-deacylase family.

The protein resides in the endoplasmic reticulum membrane. Functionally, involved in inositol deacylation of GPI-anchored proteins which plays important roles in the quality control and ER-associated degradation of GPI-anchored proteins. The protein is GPI inositol-deacylase (bst-1) of Neurospora crassa (strain ATCC 24698 / 74-OR23-1A / CBS 708.71 / DSM 1257 / FGSC 987).